We begin with the raw amino-acid sequence, 590 residues long: Glutathione S-transferase T3 (590 aa).

The 82-residue stretch at Met1–Val82 folds into the GST N-terminal domain. Residues Ser11–Gln12, Gln40–Leu41, Lys53–Val54, and Glu66–Ser67 contribute to the glutathione site. In terms of domain architecture, GST C-terminal spans Asp89–Met232. One can recognise a Myb-like domain in the interval Asp265 to Asn336. The tract at residues Ser402–Glu427 is disordered.

The protein belongs to the GST superfamily. Theta family.

Its subcellular location is the nucleus. The catalysed reaction is RX + glutathione = an S-substituted glutathione + a halide anion + H(+). In terms of biological role, may be involved in the conjugation of reduced glutathione to a wide number of exogenous and endogenous hydrophobic electrophiles and have a detoxification role against certain herbicides. This chain is Glutathione S-transferase T3 (GSTT3), found in Arabidopsis thaliana (Mouse-ear cress).